A 122-amino-acid polypeptide reads, in one-letter code: Large ribosomal subunit protein uL14 (122 aa).

It belongs to the universal ribosomal protein uL14 family. In terms of assembly, part of the 50S ribosomal subunit. Forms a cluster with proteins L3 and L19. In the 70S ribosome, L14 and L19 interact and together make contacts with the 16S rRNA in bridges B5 and B8.

Its function is as follows. Binds to 23S rRNA. Forms part of two intersubunit bridges in the 70S ribosome. The sequence is that of Large ribosomal subunit protein uL14 from Orientia tsutsugamushi (strain Boryong) (Rickettsia tsutsugamushi).